A 122-amino-acid polypeptide reads, in one-letter code: Large ribosomal subunit protein uL14 (122 aa).

Belongs to the universal ribosomal protein uL14 family. In terms of assembly, part of the 50S ribosomal subunit. Forms a cluster with proteins L3 and L19. In the 70S ribosome, L14 and L19 interact and together make contacts with the 16S rRNA in bridges B5 and B8.

In terms of biological role, binds to 23S rRNA. Forms part of two intersubunit bridges in the 70S ribosome. The polypeptide is Large ribosomal subunit protein uL14 (Malacoplasma penetrans (strain HF-2) (Mycoplasma penetrans)).